We begin with the raw amino-acid sequence, 243 residues long: UPF0246 protein SAG2081 (243 aa).

This sequence belongs to the UPF0246 family.

The sequence is that of UPF0246 protein SAG2081 from Streptococcus agalactiae serotype V (strain ATCC BAA-611 / 2603 V/R).